The sequence spans 1282 residues: MEQNNGTTEHPKEVLDQTNPSNEVTGVPNGNHAEGEGDQNAGEAPGLFQITVKLPHEPYKIQVMVSNQEQVQDVRQSIVELPGTFQYTSFHLEHNGERINDYVELSEVKDLKPDAEIVLVEDPYTEKEARMHLVRIRELIGASGDRVDNLHGICAGLSLHDSVAAGEQLSDDIPSKEENSANGTAEHALVGYEVPGPADLRTILPRKQAPFPKTVKSISLSPWNPPPYHLRQKGHLLYLQVTTNEGEQYQITSHVSGFFVNKCSNSKFDPFPRAAPKNYSAHSLLTLISLISPSFENSFKALQEANNKKDLLTTFPFQNSIPHNPWLVPPTSSPATAHQSDITRPQENYLIAGVDNSETLRDWNEEFQTTRELPRDTVQDKVFRERLTSKLFADYNDAAARGAVLVARGEVAPLNPTEGRDAQIFVYNNIFFSFGADGVGTFASEGGDEAARVAVAKDVMGVKAVNQLDIAGLFTPGTMVIDYLGKRVVGQSIVPGIFKQREPGEHQIDYGGVDGKDVIAKHEAFVPVFEKLSKALRVKKHPVWDKDGARHELESSVETKGLLGTDGRKYVLDLYRITPLDVLWYEDSENHEPYPHRMSVLRLELVESYWRFKMGQYVKEEVEKRRKAKKEAEEKAEESKPNGEAADASENAESEKKETTSPDQERVDISDFKLALNPDVFSGQVPQTDEEKEEWAQDEKEVRDACNYLRSKVLPELIQDLHDGDVGFPMDGQSLSQLLHKRGINVRYLGKLAALAKEKGARLQALTALMTQDMVARAFKHIANRYLRNLPSAFATSCIAHLLNCLLGTEVNSKPRAEIDESLREIYPEGDFSFEQVTPTALKEDIEKQIKIRYRFSLDADWTSSLRHLQLLRDISLKLGLQLGAKNYAFDRSQLKNQDHSPAANGTRTPEEGGKKKKKKGSDQASPRPAQSPAPAVTFVPDDILNIVPIVKDASPRSALSEEALEAGRISLMQNQKELGQELILESLSLHEQIYGILHPEVAKLYHQLSMLYYQSDDKDAAVELARKAVIVTERTMGVDSADAILSYLNLSLFEHATGNTKVALVYIRHALELWKIIYGPNHPDSITTMNNAAVMLQHLKLYPDSRKWFEASLTVCEELFGRQSVNTATILFQLAQALALDQDSKAAVNRMRDAYNIFLNELGPEDRNTKEAESWLEQLTQNAVYIAKHAKDIQARRRRLANLPTRLGTKPQPQVGQTTSEMANAAEARGNASLDPRSIDELLKFIEGGESSAPRTKQKKRAAARNPKLRGSKQSTVKPSS.

A disordered region spans residues 1–43 (MEQNNGTTEHPKEVLDQTNPSNEVTGVPNGNHAEGEGDQNAGE). The Clu domain occupies 341 to 585 (DITRPQENYL…RITPLDVLWY (245 aa)). Composition is skewed to basic and acidic residues over residues 631-641 (EAEEKAEESKP) and 653-669 (ESEK…RVDI). Disordered stretches follow at residues 631–669 (EAEE…RVDI) and 892–936 (RSQL…PAPA). Positions 924–936 (QASPRPAQSPAPA) are enriched in low complexity. A TPR repeat occupies 1003–1036 (AKLYHQLSMLYYQSDDKDAAVELARKAVIVTERT). Residues 1202-1282 (ANLPTRLGTK…SKQSTVKPSS (81 aa)) form a disordered region. A compositionally biased stretch (polar residues) spans 1212–1223 (PQPQVGQTTSEM). Residues 1257–1272 (TKQKKRAAARNPKLRG) show a composition bias toward basic residues. Residues 1273 to 1282 (SKQSTVKPSS) show a composition bias toward polar residues.

This sequence belongs to the CLU family. As to quaternary structure, may associate with the eukaryotic translation initiation factor 3 (eIF-3) complex.

It is found in the cytoplasm. MRNA-binding protein involved in proper cytoplasmic distribution of mitochondria. The sequence is that of Clustered mitochondria protein homolog from Coccidioides immitis (strain RS) (Valley fever fungus).